A 351-amino-acid chain; its full sequence is Quinolinate phosphoribosyltransferase [decarboxylating] 2b, mitochondrial (351 aa).

Substrate-binding positions include R142, T173–K175, R197, K207, E240, D267, S299–N301, and S320–A322.

This sequence belongs to the NadC/ModD family. As to expression, expressed in roots and flowers.

The protein localises to the mitochondrion. The catalysed reaction is nicotinate beta-D-ribonucleotide + CO2 + diphosphate = quinolinate + 5-phospho-alpha-D-ribose 1-diphosphate + 2 H(+). Its pathway is alkaloid biosynthesis; nicotine biosynthesis. The protein operates within cofactor biosynthesis; NAD(+) biosynthesis; nicotinate D-ribonucleotide from quinolinate: step 1/1. Its function is as follows. Involved in the biosynthesis of pyridine alkaloid natural products, leading mainly to the production of anabasine, anatabine, nicotine and nornicotine, effective deterrents against herbivores with antiparasitic and pesticide properties (neurotoxins); nornicotine serves as the precursor in the synthesis of the carcinogen compound N'-nitrosonornicotine (NNN). Involved in the catabolism of quinolinic acid (QA). In Nicotiana tabacum (Common tobacco), this protein is Quinolinate phosphoribosyltransferase [decarboxylating] 2b, mitochondrial.